A 494-amino-acid chain; its full sequence is Alpha-amylase A (494 aa).

A signal peptide spans 1 to 18 (MFLAKSLVCLALLAVANA). Gln19 is modified (pyrrolidone carboxylic acid). A disulfide bridge connects residues Cys46 and Cys102. The Ca(2+) site is built by Asn116, Arg165, and Asp174. A disulfide bridge links Cys153 with Cys167. Arg202 is a binding site for chloride. The active-site Nucleophile is the Asp204. Residue His208 participates in Ca(2+) binding. Glu241 functions as the Proton donor in the catalytic mechanism. 2 residues coordinate chloride: Asn304 and Arg343. 2 cysteine pairs are disulfide-bonded: Cys376/Cys382 and Cys448/Cys460.

Belongs to the glycosyl hydrolase 13 family. Monomer. Requires Ca(2+) as cofactor. It depends on chloride as a cofactor.

The catalysed reaction is Endohydrolysis of (1-&gt;4)-alpha-D-glucosidic linkages in polysaccharides containing three or more (1-&gt;4)-alpha-linked D-glucose units.. The polypeptide is Alpha-amylase A (Amy-d) (Drosophila mauritiana (Fruit fly)).